Here is a 194-residue protein sequence, read N- to C-terminus: Small ribosomal subunit protein uS4c (194 aa).

Positions Met-82–Asp-143 constitute an S4 RNA-binding domain.

The protein belongs to the universal ribosomal protein uS4 family. As to quaternary structure, part of the 30S ribosomal subunit. Contacts protein S5. The interaction surface between S4 and S5 is involved in control of translational fidelity.

It localises to the plastid. The protein localises to the chloroplast. Functionally, one of the primary rRNA binding proteins, it binds directly to 16S rRNA where it nucleates assembly of the body of the 30S subunit. Its function is as follows. With S5 and S12 plays an important role in translational accuracy. In Bobartia gladiata (Sword rush-lily), this protein is Small ribosomal subunit protein uS4c (rps4).